Consider the following 272-residue polypeptide: Cytochrome c oxidase subunit 3 (272 aa).

The next 7 helical transmembrane spans lie at 20–40 (PWPL…VLFM), 45–65 (GGGE…FTWW), 89–109 (GMIL…WAFF), 128–148 (VVAI…LSSG), 166–186 (AMQG…MQGF), 204–224 (FYMA…FLFI), and 248–268 (YWHF…WWGF).

Belongs to the cytochrome c oxidase subunit 3 family. As to quaternary structure, component of the cytochrome c oxidase (complex IV, CIV), a multisubunit enzyme composed of a catalytic core of 3 subunits and several supernumerary subunits. The complex exists as a monomer or a dimer and forms supercomplexes (SCs) in the inner mitochondrial membrane with ubiquinol-cytochrome c oxidoreductase (cytochrome b-c1 complex, complex III, CIII).

The protein resides in the mitochondrion inner membrane. It catalyses the reaction 4 Fe(II)-[cytochrome c] + O2 + 8 H(+)(in) = 4 Fe(III)-[cytochrome c] + 2 H2O + 4 H(+)(out). Its function is as follows. Component of the cytochrome c oxidase, the last enzyme in the mitochondrial electron transport chain which drives oxidative phosphorylation. The respiratory chain contains 3 multisubunit complexes succinate dehydrogenase (complex II, CII), ubiquinol-cytochrome c oxidoreductase (cytochrome b-c1 complex, complex III, CIII) and cytochrome c oxidase (complex IV, CIV), that cooperate to transfer electrons derived from NADH and succinate to molecular oxygen, creating an electrochemical gradient over the inner membrane that drives transmembrane transport and the ATP synthase. Cytochrome c oxidase is the component of the respiratory chain that catalyzes the reduction of oxygen to water. Electrons originating from reduced cytochrome c in the intermembrane space (IMS) are transferred via the dinuclear copper A center (CU(A)) of subunit 2 and heme A of subunit 1 to the active site in subunit 1, a binuclear center (BNC) formed by heme A3 and copper B (CU(B)). The BNC reduces molecular oxygen to 2 water molecules using 4 electrons from cytochrome c in the IMS and 4 protons from the mitochondrial matrix. The chain is Cytochrome c oxidase subunit 3 (COX3) from Pylaiella littoralis (Seaweed).